A 1236-amino-acid chain; its full sequence is ESX-4 secretion system protein EccC4 (1236 aa).

2 helical membrane passes run 32-52 (LLPVVMSVATVGVMVTVFLPG) and 59-79 (PTFLAFPMMMLVSLVVTAVTG). 3 FtsK domains span residues 407-607 (GTAV…SESR), 747-936 (RVPL…ADSE), and 1018-1201 (GQPV…DEGA). ATP is bound by residues 430–437 (GATGSGKS), 765–772 (GAPQTGKS), and 1035–1042 (GDNECGKT).

As to quaternary structure, part of the ESX-4 / type VII secretion system (T7SS), which is composed of cytosolic and membrane components.

It localises to the cell membrane. The sequence is that of ESX-4 secretion system protein EccC4 (eccC4) from Mycobacterium tuberculosis (strain ATCC 25618 / H37Rv).